Reading from the N-terminus, the 1657-residue chain is Ras GTPase-activating-like protein IQGAP1 (1657 aa).

Serine 2 is modified (N-acetylserine). Serine 2 is modified (phosphoserine). The Calponin-homology (CH) domain maps to 44–159 (LCHLEEAKRW…YCIHALSLYL (116 aa)). Tyrosine 172 bears the Phosphotyrosine mark. Serine 330 is subject to Phosphoserine. Residues 679–712 (GDNNSKWVKHWVKGGYYYYHNLETQEGGWDEPPN) form the WW domain. IQ domains lie at 745-774 (NEGL…FLKK), 775-804 (QIPA…YLRS), 805-834 (HKDE…YFRD), and 835-864 (HIND…AEDP). Residues 956 to 1274 (GGLKALSKEK…FFQTACDVPE (319 aa)) are C1. One can recognise a Ras-GAP domain in the interval 1020–1269 (YLLLRLFKTA…QKFRRFFQTA (250 aa)). The tract at residues 1276–1657 (QDKFNVDEYS…FLLNKKFYGK (382 aa)) is C2. A disordered region spans residues 1410 to 1448 (TPATSEQEAEHQRAMQRRAIRDAKTPDKMKKSKSVKEDS). Over residues 1417-1448 (EAEHQRAMQRRAIRDAKTPDKMKKSKSVKEDS) the composition is skewed to basic and acidic residues. Position 1441 is a phosphoserine; by PKC (serine 1441). Serine 1443 bears the Phosphoserine; by PKC/PRKCE mark.

In terms of assembly, interacts with CDC42; the interaction is demonstrated with IQGAP1 in GTP-bound and in nucleotide-free state. Interacts with RAC1. Does not interact with RHOA. Interacts with TSG101. Interacts with PAK6. Interacts with TMEM14B; this interaction increases IQGAP1 phosphorylation and induces its nuclear translocation. Interacts with SASH1. Interacts with PJVK. Interacts with SLC26A4; this interaction enhances the chloride-bicarbonate exchange activity of SLC26A4. Interacts with SVEP1. Interacts with ILK; the interaction is required for localization of IQGAP to the cell cortex. (Microbial infection) Interacts with ebolavirus vp40. As to quaternary structure, (Microbial infection) Interacts with human cytomegalovirus protein UL5. In terms of assembly, (Microbial infection) Interacts with C.jejuni invasion antigen D (CiaD). Phosphorylation of Ser-1443 by PKC/PRKCE prevents interaction between C1 and C2, allowing binding of nucleotide-free CDC42. Ser-1443 phosphorylation enhances the ability to promote neurite outgrowth. As to expression, expressed in the placenta, lung, and kidney. A lower level expression is seen in the heart, liver, skeletal muscle and pancreas.

Its subcellular location is the cell membrane. It is found in the nucleus. The protein resides in the cytoplasm. The protein localises to the cell cortex. It localises to the apical cell membrane. Its subcellular location is the basolateral cell membrane. Plays a crucial role in regulating the dynamics and assembly of the actin cytoskeleton. Recruited to the cell cortex by interaction with ILK which allows it to cooperate with its effector DIAPH1 to locally stabilize microtubules and allow stable insertion of caveolae into the plasma membrane. Binds to activated CDC42 but does not stimulate its GTPase activity. Associates with calmodulin. May promote neurite outgrowth. May play a possible role in cell cycle regulation by contributing to cell cycle progression after DNA replication arrest. The protein is Ras GTPase-activating-like protein IQGAP1 (IQGAP1) of Homo sapiens (Human).